Reading from the N-terminus, the 307-residue chain is Salivary glue protein Sgs-3 (307 aa).

The first 23 residues, 1-23, serve as a signal peptide directing secretion; that stretch reads MKLTIATALASILLIGSANVANC. The tract at residues 56–257 is disordered; that stretch reads APPTQQSTTQ…PTTTKPTTPK (202 aa).

O-glycosylated by Pgnat9 in salivary glands. In terms of tissue distribution, specifically expressed in the salivary gland.

The protein resides in the secreted. This Drosophila melanogaster (Fruit fly) protein is Salivary glue protein Sgs-3.